We begin with the raw amino-acid sequence, 181 residues long: Adenine phosphoribosyltransferase (181 aa).

It belongs to the purine/pyrimidine phosphoribosyltransferase family. In terms of assembly, homodimer.

It is found in the cytoplasm. It catalyses the reaction AMP + diphosphate = 5-phospho-alpha-D-ribose 1-diphosphate + adenine. It functions in the pathway purine metabolism; AMP biosynthesis via salvage pathway; AMP from adenine: step 1/1. Catalyzes a salvage reaction resulting in the formation of AMP, that is energically less costly than de novo synthesis. The chain is Adenine phosphoribosyltransferase from Chromohalobacter salexigens (strain ATCC BAA-138 / DSM 3043 / CIP 106854 / NCIMB 13768 / 1H11).